The sequence spans 259 residues: Proteasome subunit alpha (259 aa).

Over residues 233–243 (PAAPAAASESA) the composition is skewed to low complexity. Positions 233–259 (PAAPAAASESAPEPKPDTETKPADPQD) are disordered. Residues 244–259 (PEPKPDTETKPADPQD) show a composition bias toward basic and acidic residues.

Belongs to the peptidase T1A family. The 20S proteasome core is composed of 14 alpha and 14 beta subunits that assemble into four stacked heptameric rings, resulting in a barrel-shaped structure. The two inner rings, each composed of seven catalytic beta subunits, are sandwiched by two outer rings, each composed of seven alpha subunits. The catalytic chamber with the active sites is on the inside of the barrel. Has a gated structure, the ends of the cylinder being occluded by the N-termini of the alpha-subunits. Is capped by the proteasome-associated ATPase, ARC.

The protein resides in the cytoplasm. Its pathway is protein degradation; proteasomal Pup-dependent pathway. Its activity is regulated as follows. The formation of the proteasomal ATPase ARC-20S proteasome complex, likely via the docking of the C-termini of ARC into the intersubunit pockets in the alpha-rings, may trigger opening of the gate for substrate entry. Interconversion between the open-gate and close-gate conformations leads to a dynamic regulation of the 20S proteasome proteolysis activity. Functionally, component of the proteasome core, a large protease complex with broad specificity involved in protein degradation. The protein is Proteasome subunit alpha of Rhodococcus opacus (strain B4).